A 61-amino-acid polypeptide reads, in one-letter code: Metallothionein-2B (61 aa).

The residue at position 1 (M1) is an N-acetylmethionine. Positions M1–C29 are beta. The a divalent metal cation site is built by C5, C7, C13, C15, C19, C21, C24, C26, C29, C33, C34, C36, C37, C41, C44, C48, C50, C57, C59, and C60. The interval K30 to A61 is alpha.

The protein belongs to the metallothionein superfamily. Type 1 family. Monomer.

Metallothioneins have a high content of cysteine residues that bind various heavy metals; these proteins are transcriptionally regulated by both heavy metals and glucocorticoids. In Sus scrofa (Pig), this protein is Metallothionein-2B (MT2B).